We begin with the raw amino-acid sequence, 322 residues long: Ribose-phosphate pyrophosphokinase 1 (322 aa).

ATP is bound by residues 39–41 (DGE) and 98–99 (RQ). Residues H132 and D173 each contribute to the Mg(2+) site. K196 is a catalytic residue. Residues R198, D224, and 228 to 232 (DTAGT) each bind D-ribose 5-phosphate.

It belongs to the ribose-phosphate pyrophosphokinase family. Class I subfamily. As to quaternary structure, homohexamer. Mg(2+) serves as cofactor.

The protein localises to the cytoplasm. It carries out the reaction D-ribose 5-phosphate + ATP = 5-phospho-alpha-D-ribose 1-diphosphate + AMP + H(+). It participates in metabolic intermediate biosynthesis; 5-phospho-alpha-D-ribose 1-diphosphate biosynthesis; 5-phospho-alpha-D-ribose 1-diphosphate from D-ribose 5-phosphate (route I): step 1/1. Its function is as follows. Involved in the biosynthesis of the central metabolite phospho-alpha-D-ribosyl-1-pyrophosphate (PRPP) via the transfer of pyrophosphoryl group from ATP to 1-hydroxyl of ribose-5-phosphate (Rib-5-P). This Streptococcus pneumoniae serotype 4 (strain ATCC BAA-334 / TIGR4) protein is Ribose-phosphate pyrophosphokinase 1.